The primary structure comprises 380 residues: Phospho-N-acetylmuramoyl-pentapeptide-transferase (380 aa).

11 helical membrane-spanning segments follow: residues 26-46 (IVAA…IFIE), 75-95 (MGGA…ADLA), 98-118 (FVWA…TDDW), 135-155 (LVLQ…DWRF), 161-181 (FPWV…FVPS), 183-203 (LFNP…VIAT), 222-242 (VVSA…IAGF), 259-279 (LGVF…YNTY), 283-303 (VFMG…MAVL), 311-331 (AILH…VWSF), and 357-377 (KIIV…LLSI).

The protein belongs to the glycosyltransferase 4 family. MraY subfamily. Mg(2+) serves as cofactor.

It localises to the cell inner membrane. The catalysed reaction is UDP-N-acetyl-alpha-D-muramoyl-L-alanyl-gamma-D-glutamyl-meso-2,6-diaminopimeloyl-D-alanyl-D-alanine + di-trans,octa-cis-undecaprenyl phosphate = di-trans,octa-cis-undecaprenyl diphospho-N-acetyl-alpha-D-muramoyl-L-alanyl-D-glutamyl-meso-2,6-diaminopimeloyl-D-alanyl-D-alanine + UMP. The protein operates within cell wall biogenesis; peptidoglycan biosynthesis. Its function is as follows. Catalyzes the initial step of the lipid cycle reactions in the biosynthesis of the cell wall peptidoglycan: transfers peptidoglycan precursor phospho-MurNAc-pentapeptide from UDP-MurNAc-pentapeptide onto the lipid carrier undecaprenyl phosphate, yielding undecaprenyl-pyrophosphoryl-MurNAc-pentapeptide, known as lipid I. This Anaeromyxobacter dehalogenans (strain 2CP-1 / ATCC BAA-258) protein is Phospho-N-acetylmuramoyl-pentapeptide-transferase.